The sequence spans 424 residues: Serine hydroxymethyltransferase 2 (424 aa).

Residues leucine 125 and 129-131 contribute to the (6S)-5,6,7,8-tetrahydrofolate site; that span reads GHL. Residue lysine 234 is modified to N6-(pyridoxal phosphate)lysine. Residue glutamate 250 coordinates (6S)-5,6,7,8-tetrahydrofolate.

This sequence belongs to the SHMT family. As to quaternary structure, homodimer. Requires pyridoxal 5'-phosphate as cofactor.

Its subcellular location is the cytoplasm. The enzyme catalyses (6R)-5,10-methylene-5,6,7,8-tetrahydrofolate + glycine + H2O = (6S)-5,6,7,8-tetrahydrofolate + L-serine. The protein operates within one-carbon metabolism; tetrahydrofolate interconversion. It functions in the pathway amino-acid biosynthesis; glycine biosynthesis; glycine from L-serine: step 1/1. In terms of biological role, catalyzes the reversible interconversion of serine and glycine with tetrahydrofolate (THF) serving as the one-carbon carrier. This reaction serves as the major source of one-carbon groups required for the biosynthesis of purines, thymidylate, methionine, and other important biomolecules. Also exhibits THF-independent aldolase activity toward beta-hydroxyamino acids, producing glycine and aldehydes, via a retro-aldol mechanism. In Burkholderia pseudomallei (strain 1710b), this protein is Serine hydroxymethyltransferase 2.